The following is a 477-amino-acid chain: Methionine aminopeptidase 2 (477 aa).

Residues 1–121 are disordered; sequence MAGVEEAASC…TDPPSVPICD (121 aa). Ala-2 bears the N-acetylalanine mark. Positions 36–46 are enriched in basic residues; it reads KKKKRKKKKSK. A Phosphoserine modification is found at Ser-45. Residues 54-78 show a composition bias toward basic and acidic residues; sequence EPDKEAGASVDEVTRQLERQALEEK. A Phosphoserine; alternate modification is found at Ser-62. An O-linked (GlcNAc) serine; alternate glycan is attached at Ser-62. Residues 79–91 are compositionally biased toward acidic residues; the sequence is EKDDDDEDGDGDG. Residues 96–108 are compositionally biased toward basic residues; the sequence is GKKKKKKKKKRGP. Position 230 (His-230) interacts with substrate. A divalent metal cation-binding residues include Asp-250, Asp-261, and His-330. His-338 contributes to the substrate binding site. A divalent metal cation contacts are provided by Glu-363 and Glu-458.

The protein belongs to the peptidase M24A family. Methionine aminopeptidase eukaryotic type 2 subfamily. Binds EIF2S1 at low magnesium concentrations. Interacts strongly with the eIF-2 gamma-subunit EIF2S3. The cofactor is Co(2+). It depends on Zn(2+) as a cofactor. Mn(2+) serves as cofactor. Fe(2+) is required as a cofactor. In terms of processing, contains approximately 12 O-linked N-acetylglucosamine (GlcNAc) residues. O-glycosylation is required for EIF2S1 binding.

The protein localises to the cytoplasm. It catalyses the reaction Release of N-terminal amino acids, preferentially methionine, from peptides and arylamides.. Cotranslationally removes the N-terminal methionine from nascent proteins. The N-terminal methionine is often cleaved when the second residue in the primary sequence is small and uncharged (Met-Ala-, Cys, Gly, Pro, Ser, Thr, or Val). Its function is as follows. Protects eukaryotic initiation factor EIF2S1 from translation-inhibiting phosphorylation by inhibitory kinases such as EIF2AK2/PKR and EIF2AK1/HCR. Plays a critical role in the regulation of protein synthesis. The chain is Methionine aminopeptidase 2 from Bos taurus (Bovine).